The chain runs to 180 residues: UPF0227 protein YpsIP31758_1593 (180 aa).

It belongs to the UPF0227 family.

The chain is UPF0227 protein YpsIP31758_1593 from Yersinia pseudotuberculosis serotype O:1b (strain IP 31758).